Here is a 97-residue protein sequence, read N- to C-terminus: Exodeoxyribonuclease 7 small subunit (97 aa).

The tract at residues 1–22 is disordered; it reads MAKTASPGATPPGNGTEPLPDN.

The protein belongs to the XseB family. As to quaternary structure, heterooligomer composed of large and small subunits.

It is found in the cytoplasm. It carries out the reaction Exonucleolytic cleavage in either 5'- to 3'- or 3'- to 5'-direction to yield nucleoside 5'-phosphates.. Functionally, bidirectionally degrades single-stranded DNA into large acid-insoluble oligonucleotides, which are then degraded further into small acid-soluble oligonucleotides. In Burkholderia cenocepacia (strain HI2424), this protein is Exodeoxyribonuclease 7 small subunit.